A 416-amino-acid polypeptide reads, in one-letter code: Lysosome-associated membrane glycoprotein 3 (416 aa).

The N-terminal stretch at 1 to 27 is a signal peptide; it reads MPRQLSAAAALFASLAVILHDGSQMRA. The Lumenal portion of the chain corresponds to 28–381; that stretch reads KAFPETRDYS…NVDECSSDYT (354 aa). N-linked (GlcNAc...) asparagine glycosylation is found at Asn-112, Asn-158, Asn-164, Asn-200, Asn-232, Asn-266, and Asn-291. Disordered stretches follow at residues 136-167 and 179-219; these read PTIT…NQTT and STTG…LAPQ. Positions 143 to 160 are enriched in low complexity; sequence HTTGTSSSTVSHTTGNTT. The span at 188 to 208 shows a compositional bias: low complexity; sequence PTHAPGTTAAAHNTTRTAAPA. Cys-237 and Cys-274 are joined by a disulfide. Cys-339 and Cys-376 form a disulfide bridge. The chain crosses the membrane as a helical span at residues 382 to 402; that stretch reads IVLPVIGAIVVGLCLMGMGVY. At 403-416 the chain is on the cytoplasmic side; the sequence is KIRLRCQSSGYQRI.

Belongs to the LAMP family. Monomer. Interacts with FURIN. In terms of assembly, (Microbial infection) Interacts with mumps virus protein F; this interaction promotes protein F cleavage by FURIN. As to expression, detected in tonsil interdigitating dendritic cells, in spleen, lymph node, Peyer's patches in the small instestine, in thymus medulla and in B-cells (at protein level). Expressed in lymphoid organs and dendritic cells. Expressed in lung. Up-regulated in carcinomas of the esophagus, colon, rectum, ureter, stomach, breast, fallopian tube, thyroid and parotid tissues.

The protein localises to the cell surface. Its subcellular location is the lysosome membrane. It is found in the cytoplasmic vesicle membrane. The protein resides in the early endosome membrane. Its function is as follows. Lysosomal membrane glycoprotein which plays a role in the unfolded protein response (UPR) that contributes to protein degradation and cell survival during proteasomal dysfunction. Plays a role in the process of fusion of the lysosome with the autophagosome, thereby modulating the autophagic process. Promotes hepatocellular lipogenesis through activation of the PI3K/Akt pathway. May also play a role in dendritic cell function and in adaptive immunity. Functionally, (Microbial infection) Plays a positive role in post-entry steps of influenza A virus replication, either virus uncoating, cytosolic transport, or nuclear import of viral components, and promotes nuclear accumulation of influenza nucleoprotein/NP at early stages of viral infection. In terms of biological role, (Microbial infection) Supports the FURIN-mediated cleavage of mumps virus fusion protein F by interacting with both FURIN and the unprocessed form but not the processed form of the viral protein F. (Microbial infection) Promotes the intracellular proliferation of Salmonella typhimuium. This chain is Lysosome-associated membrane glycoprotein 3 (LAMP3), found in Homo sapiens (Human).